Reading from the N-terminus, the 299-residue chain is Formylglycine-generating enzyme (299 aa).

Cys-263 and Cys-268 together coordinate Cu cation.

This sequence belongs to the sulfatase-modifying factor family. It depends on Cu cation as a cofactor.

It carries out the reaction L-cysteinyl-[sulfatase] + 2 a thiol + O2 = an organic disulfide + 3-oxo-L-alanyl-[sulfatase] + hydrogen sulfide + H2O + H(+). The protein operates within protein modification; sulfatase oxidation. Oxidase that catalyzes the conversion of cysteine to 3-oxoalanine on target proteins. 3-oxoalanine modification, which is also named formylglycine (fGly), occurs in the maturation of arylsulfatases and some alkaline phosphatases that use the hydrated form of 3-oxoalanine as a catalytic nucleophile. This chain is Formylglycine-generating enzyme, found in Mycobacterium tuberculosis (strain ATCC 25618 / H37Rv).